A 1098-amino-acid chain; its full sequence is Transcription elongation regulator 1 (1098 aa).

Basic and acidic residues predominate over residues 1–15 (MAERGGDGGESERFN). The tract at residues 1–105 (MAERGGDGGE…RPPFMPPPMS (105 aa)) is disordered. Serine 11 is modified (phosphoserine). Residue arginine 20 is modified to Omega-N-methylarginine. Arginine 28, arginine 30, arginine 41, and arginine 48 each carry asymmetric dimethylarginine. Pro residues predominate over residues 32-105 (PAPPPNAVMR…RPPFMPPPMS (74 aa)). The 34-residue stretch at 131–164 (PPTEEIWVENKTPDGKVYYYNARTRESAWTKPDG) folds into the WW 1 domain. Positions 184–244 (QAQAQAQAQA…AQAQAQAQVQ (61 aa)) form a coiled coil. Over residues 259-333 (STPTTSSPAP…PTATPVQTVP (75 aa)) the composition is skewed to low complexity. A disordered region spans residues 259–348 (STPTTSSPAP…TLPPAVPHSV (90 aa)). Residues 334–344 (QPHPQTLPPAV) are compositionally biased toward pro residues. The WW 2 domain maps to 429–462 (ATAVSEWTEYKTADGKTYYYNNRTLESTWEKPQE). 2 stretches are compositionally biased toward basic and acidic residues: residues 469–481 (LEEK…KEPS) and 496–506 (EEPIKEIKEEP). Residues 469–526 (LEEKIKEPIKEPSEEPLPMETEEEDPKEEPIKEIKEEPKEEEMTEEEKAAQKAKPVAT) form a disordered region. Residues lysine 503 and lysine 507 each participate in a glycyl lysine isopeptide (Lys-Gly) (interchain with G-Cter in SUMO2) cross-link. The region spanning 528–561 (PIPGTPWCVVWTGDERVFFYNPTTRLSMWDRPDD) is the WW 3 domain. Residues 606 to 655 (AIKEEQELMEEINEDEPVKAKKRKRDDNKDIDSEKEAAMEAEIKAARERA) adopt a coiled-coil conformation. A Glycyl lysine isopeptide (Lys-Gly) (interchain with G-Cter in SUMO2) cross-link involves residue lysine 608. The interval 615–640 (EEINEDEPVKAKKRKRDDNKDIDSEK) is disordered. The Nuclear localization signal motif lies at 626-630 (KKRKR). Over residues 630-640 (RDDNKDIDSEK) the composition is skewed to basic and acidic residues. Serine 638 is subject to Phosphoserine. FF domains follow at residues 659-712 (LEAR…YVKT), 725-779 (IMQA…FVAA), and 791-846 (RGEK…YIEK). Serine 834 carries the post-translational modification Phosphoserine. A coiled-coil region spans residues 844–906 (IEKIAKNLDS…EEAIQNFKAL (63 aa)). The segment at 870-895 (REREREVQKARSEQTKEIDREREQHK) is disordered. 3 FF domains span residues 896–952 (REEA…HIEA), 954–1010 (TKKK…YIRD), and 1012–1077 (YITA…YVDD). A Phosphoserine modification is found at serine 933. Residues 1076 to 1098 (DDLDRRGPPPPPTASEPTRRSTK) form a disordered region.

As to quaternary structure, binds formin. Interacts (via the second WW domain) with TREX1 (via proline-rich region). Binds RNA polymerase II, HD and SF1. Detected in brain neurons.

The protein localises to the nucleus. Transcription factor that binds RNA polymerase II and inhibits the elongation of transcripts from target promoters. Regulates transcription elongation in a TATA box-dependent manner. Necessary for TAT-dependent activation of the human immunodeficiency virus type 1 (HIV-1) promoter. The protein is Transcription elongation regulator 1 (TCERG1) of Homo sapiens (Human).